Here is a 115-residue protein sequence, read N- to C-terminus: Salivary protein gSG6 (115 aa).

The first 28 residues, methionine 1 to alanine 28, serve as a signal peptide directing secretion.

In terms of tissue distribution, female saliva (at protein level). Distal-lateral lobes of female salivary gland (at protein level). Not detected in male salivary gland (at protein level).

It is found in the secreted. In terms of biological role, required for efficient probing and blood feeding. This Anopheles gambiae (African malaria mosquito) protein is Salivary protein gSG6.